A 528-amino-acid polypeptide reads, in one-letter code: Zinc finger protein 16-like (528 aa).

Residues 1 to 28 (MSRKRNHCYMETGASSESQGAFVDSAGP) are disordered. Residues 79–106 (IRVLKMELREKSDEIELLKAKLESAEKD) are a coiled coil. 2 disordered regions span residues 159–202 (GAAE…TDAE) and 232–293 (FKGD…DRME). The span at 232–242 (FKGDSETKCED) shows a compositional bias: basic and acidic residues. A compositionally biased stretch (acidic residues) spans 244-256 (PPMDEEDENEDSE). 2 stretches are compositionally biased toward basic and acidic residues: residues 257–270 (EGRG…DHFP) and 278–293 (GEDR…DRME). The C2H2-type 1 zinc-finger motif lies at 303–326 (FICPFCGTLCPDSSFLEEHIKLMH). A compositionally biased stretch (low complexity) spans 333–345 (QSTSAGSSSQAEG). Residues 333–359 (QSTSAGSSSQAEGDSGEAGPASRGARE) form a disordered region. 4 C2H2-type zinc fingers span residues 366–388 (YECG…QRIH), 394–416 (FVCP…RLSH), 423–445 (FPCP…QRVH), and 451–473 (YACP…MRIH). The C2H2-type 6; degenerate zinc finger occupies 479 to 501 (YTCYQCGRSFRHLGTYKSHRCMP). Residues 502–528 (ATQMPSEHSPPWAQEDKVQTGRLQGYV) are disordered.

The protein belongs to the krueppel C2H2-type zinc-finger protein family.

It is found in the nucleus. Functionally, probable transcription factor. Important for development and migration of oligodendrocyte precursor cells, and normal myelination of axons in the central nervous system (CNS). Functions autonomously in oligodendrocytes to promote CNS myelination. Seems to act in parallel with notch3 during oligodendrocyte development. The chain is Zinc finger protein 16-like from Danio rerio (Zebrafish).